The following is a 700-amino-acid chain: Elongation factor G (700 aa).

In terms of domain architecture, tr-type G spans 6–286 (HKVRNIGIMA…AVIDYLPSPL (281 aa)). Residues 15–22 (AHIDAGKT), 79–83 (DTPGH), and 133–136 (NKMD) each bind GTP.

This sequence belongs to the TRAFAC class translation factor GTPase superfamily. Classic translation factor GTPase family. EF-G/EF-2 subfamily.

Its subcellular location is the cytoplasm. In terms of biological role, catalyzes the GTP-dependent ribosomal translocation step during translation elongation. During this step, the ribosome changes from the pre-translocational (PRE) to the post-translocational (POST) state as the newly formed A-site-bound peptidyl-tRNA and P-site-bound deacylated tRNA move to the P and E sites, respectively. Catalyzes the coordinated movement of the two tRNA molecules, the mRNA and conformational changes in the ribosome. This Leifsonia xyli subsp. xyli (strain CTCB07) protein is Elongation factor G.